The sequence spans 137 residues: Large ribosomal subunit protein uL16c (137 aa).

Belongs to the universal ribosomal protein uL16 family. As to quaternary structure, part of the 50S ribosomal subunit.

Its subcellular location is the plastid. It localises to the chloroplast. This is Large ribosomal subunit protein uL16c from Vigna unguiculata (Cowpea).